The chain runs to 222 residues: Protein GrpE (222 aa).

The interval 1-21 (MSDEKNKFTDASFENCDLKNP) is disordered.

It belongs to the GrpE family. Homodimer.

It is found in the cytoplasm. Functionally, participates actively in the response to hyperosmotic and heat shock by preventing the aggregation of stress-denatured proteins, in association with DnaK and GrpE. It is the nucleotide exchange factor for DnaK and may function as a thermosensor. Unfolded proteins bind initially to DnaJ; upon interaction with the DnaJ-bound protein, DnaK hydrolyzes its bound ATP, resulting in the formation of a stable complex. GrpE releases ADP from DnaK; ATP binding to DnaK triggers the release of the substrate protein, thus completing the reaction cycle. Several rounds of ATP-dependent interactions between DnaJ, DnaK and GrpE are required for fully efficient folding. This Bartonella tribocorum (strain CIP 105476 / IBS 506) protein is Protein GrpE.